Here is a 364-residue protein sequence, read N- to C-terminus: uncharacterized protein (364 aa).

This is an uncharacterized protein from Acanthamoeba polyphaga mimivirus (APMV).